A 250-amino-acid polypeptide reads, in one-letter code: Cholesterol ring-cleaving hydrolase IpdB subunit (250 aa).

It belongs to the 3-oxoacid CoA-transferase subunit B family. As to quaternary structure, heterotetramer composed of 2 IpdA subunits and 2 IpdB subunits.

The enzyme catalyses (3E)-2-(2-carboxylatoethyl)-3-methyl-6-oxocyclohex-1-ene-1-carboxyl-CoA + H2O = 6-methyl-3,7-dioxodecanedioyl-CoA. It participates in steroid metabolism; cholesterol degradation. Functionally, involved in the final steps of cholesterol and steroid degradation. Opens the last steroid ring of cholesterol by catalyzing the hydrolysis of (3E)-2-(2-carboxylatoethyl)-3-methyl-6-oxocyclohex-1-ene-1-carboxyl-CoA (COCHEA-CoA) to 6-methyl-3,7-dioxodecanedioyl-CoA (MeDODA-CoA). This Mycobacterium bovis (strain ATCC BAA-935 / AF2122/97) protein is Cholesterol ring-cleaving hydrolase IpdB subunit.